The following is a 338-amino-acid chain: Aspartate carbamoyltransferase catalytic subunit (338 aa).

Carbamoyl phosphate-binding residues include Arg-59 and Thr-60. Lys-87 contributes to the L-aspartate binding site. Carbamoyl phosphate is bound by residues Arg-109, His-142, and Gln-145. L-aspartate contacts are provided by Arg-182 and Arg-253. Gly-294 and Pro-295 together coordinate carbamoyl phosphate.

The protein belongs to the aspartate/ornithine carbamoyltransferase superfamily. ATCase family. Heterododecamer (2C3:3R2) of six catalytic PyrB chains organized as two trimers (C3), and six regulatory PyrI chains organized as three dimers (R2).

The enzyme catalyses carbamoyl phosphate + L-aspartate = N-carbamoyl-L-aspartate + phosphate + H(+). It participates in pyrimidine metabolism; UMP biosynthesis via de novo pathway; (S)-dihydroorotate from bicarbonate: step 2/3. Its function is as follows. Catalyzes the condensation of carbamoyl phosphate and aspartate to form carbamoyl aspartate and inorganic phosphate, the committed step in the de novo pyrimidine nucleotide biosynthesis pathway. This is Aspartate carbamoyltransferase catalytic subunit from Prochlorococcus marinus (strain AS9601).